Consider the following 137-residue polypeptide: MNIALVAHDQMKNTMVGFCIGYESILKKYGLYATGTTGKRIMDETELNINRLASGPLGGDQQIGSLIVTQEIDLVIFLRDPLTSQAHETDIQALIRLCDVYHVPIATNLASAEIFIKALDRGELSWREVRKSKSQRI.

Positions 1 to 137 constitute an MGS-like domain; sequence MNIALVAHDQ…EVRKSKSQRI (137 aa). Residues H8, K12, 34 to 37, and 54 to 55 each bind substrate; these read TGTT and SG. The Proton donor/acceptor role is filled by D60. Substrate is bound at residue H87.

It belongs to the methylglyoxal synthase family.

The catalysed reaction is dihydroxyacetone phosphate = methylglyoxal + phosphate. Functionally, catalyzes the formation of methylglyoxal from dihydroxyacetone phosphate. This chain is Methylglyoxal synthase, found in Clostridioides difficile (strain 630) (Peptoclostridium difficile).